A 410-amino-acid chain; its full sequence is Probable intron-encoded endonuclease bI1 (410 aa).

The tract at residues 1–131 (MRLLKTHPIL…VLMMAIAFLG (131 aa)) is COB exon 1 encoded. 3 helical membrane passes run 32–52 (FGSLLGVCLIIQILTGVFLAM), 75–95 (GWLIRYLHANTASFFFIFVYL), and 112–132 (LLWSIGVIILVLMMAIAFLGF). Residues 132–410 (FNGQKYMCFY…KKNYIVKVIK (279 aa)) are COB intron 1 encoded. One can recognise a GIY-YIG domain in the interval 196–286 (PFSGIYMIVN…LETLKPEYNI (91 aa)).

The protein to endonucleases of group I introns of fungi and phage. Post-translationally, the mature protein may arise from proteolytic cleavage of an in-frame translation of COB exon 1 plus intron 1, containing the bI1 open reading frame.

The protein resides in the mitochondrion. It localises to the membrane. Functionally, mitochondrial DNA endonuclease involved in intron homing. The polypeptide is Probable intron-encoded endonuclease bI1 (bI1) (Mycosarcoma maydis (Corn smut fungus)).